The primary structure comprises 274 residues: Transcription factor Ovo-like 2 (274 aa).

A compositionally biased stretch (basic residues) spans 1–11; sequence MPKVFLVKRRS. The disordered stretch occupies residues 1 to 88; that stretch reads MPKVFLVKRR…ETPELHDAQG (88 aa). The span at 18–29 shows a compositional bias: basic and acidic residues; that stretch reads SWDELPDDKRAD. The span at 50 to 74 shows a compositional bias: low complexity; the sequence is DGGSSSGCSSSAGEPGGAESSSSPR. 4 C2H2-type zinc fingers span residues 118 to 140, 146 to 168, 174 to 197, and 213 to 236; these read HNCDLCGKSFRLQRMLNRHLKCH, HLCTFCGKGFNDTFDLKRHVRTH, YKCEVCNKAFTQRCSLESHLKKIH, and YVCEDCGYTGPTQEDLYLHVNSDH. Serine 268 is subject to Phosphoserine.

The protein belongs to the krueppel C2H2-type zinc-finger protein family. In terms of assembly, interacts (via zinc-finger domains) with CEBPA (via bZIP domain); the interaction inhibits the transcription factor activity of CEBPA and is required to repress adipogenesis. Expressed highly in testis, specifically in spermatocytes. Expressed also in skin and at lower levels in the ovary. Expressed in adipose tissues. Expression is lower than in testis and a relatively higher expression level is detected in the stromal vascular fraction (SVF) than in fat cells themselves.

The protein localises to the nucleus. In terms of biological role, zinc-finger transcription repressor factor. Plays a critical role in maintaining the identity of epithelial lineages by suppressing epithelial-to mesenchymal transition (EMT) mainly through the repression of ZEB1, an EMT inducer. Positively regulates neuronal differentiation. Suppresses cell cycling and terminal differentiation of keratinocytes by directly repressing MYC and NOTCH1. Important for the correct development of primordial germ cells in embryos. Plays dual functions in thermogenesis and adipogenesis to maintain energy balance. Essential for brown/beige adipose tissue-mediated thermogenesis, is necessary for the development of brown adipocytes. In white adipose tissues, limits adipogenesis by blocking CEBPA binding to its transcriptional targets and inhibiting its transcription factor activity. The polypeptide is Transcription factor Ovo-like 2 (Mus musculus (Mouse)).